Here is a 903-residue protein sequence, read N- to C-terminus: Protein translocase subunit SecA (903 aa).

ATP-binding positions include Q89, 107 to 111 (GEGKT), and D502. 4 residues coordinate Zn(2+): C887, C889, C898, and H899.

Belongs to the SecA family. Monomer and homodimer. Part of the essential Sec protein translocation apparatus which comprises SecA, SecYEG and auxiliary proteins SecDF-YajC and YidC. Requires Zn(2+) as cofactor.

Its subcellular location is the cell inner membrane. It localises to the cytoplasm. It carries out the reaction ATP + H2O + cellular proteinSide 1 = ADP + phosphate + cellular proteinSide 2.. Part of the Sec protein translocase complex. Interacts with the SecYEG preprotein conducting channel. Has a central role in coupling the hydrolysis of ATP to the transfer of proteins into and across the cell membrane, serving both as a receptor for the preprotein-SecB complex and as an ATP-driven molecular motor driving the stepwise translocation of polypeptide chains across the membrane. The protein is Protein translocase subunit SecA of Jannaschia sp. (strain CCS1).